The following is a 336-amino-acid chain: Fructose-1,6-bisphosphatase class 1 (336 aa).

4 residues coordinate Mg(2+): E92, D115, L117, and D118. Residues 118–121 (DGSS), N211, Y244, 262–264 (YLY), and K274 contribute to the substrate site. E280 is a binding site for Mg(2+).

Belongs to the FBPase class 1 family. As to quaternary structure, homotetramer. The cofactor is Mg(2+).

Its subcellular location is the cytoplasm. It catalyses the reaction beta-D-fructose 1,6-bisphosphate + H2O = beta-D-fructose 6-phosphate + phosphate. Its pathway is carbohydrate biosynthesis; gluconeogenesis. This is Fructose-1,6-bisphosphatase class 1 from Aliivibrio fischeri (strain ATCC 700601 / ES114) (Vibrio fischeri).